A 620-amino-acid chain; its full sequence is Rhamnogalacturonan endolyase YesW (620 aa).

An N-terminal signal peptide occupies residues 1–37 (MRRSCLMIRRRKRMFTAVTLLVLLVMGTSVCPVKAEG). A disordered region spans residues 133–152 (LDKPAGGTTPKGESYTYSAN). Asparagine 152 lines the substrate pocket. Residues aspartate 153, aspartate 158, aspartate 160, aspartate 162, glutamine 164, and glutamate 166 each coordinate Ca(2+). Aspartate 172 serves as a coordination point for substrate. 2 residues coordinate a carbohydrate: aspartate 187 and lysine 207. The Ca(2+) site is built by aspartate 222, aspartate 224, aspartate 226, lysine 228, and glutamate 230. A carbohydrate-binding residues include glycine 238 and arginine 255. Ca(2+) is bound by residues histidine 363, aspartate 369, aspartate 371, aspartate 373, lysine 375, glutamate 377, aspartate 386, histidine 387, histidine 399, aspartate 401, aspartate 407, aspartate 409, arginine 412, glycine 414, glutamate 416, and glutamate 422. Arginine 452 provides a ligand contact to substrate. Ca(2+) is bound by residues aspartate 457, aspartate 459, tyrosine 462, glycine 464, glutamate 466, aspartate 496, aspartate 498, leucine 500, and glutamate 502. 532–534 (NGT) lines the substrate pocket. Positions 543, 545, 547, 549, 551, 592, and 594 each coordinate Ca(2+). Residue tyrosine 595 coordinates substrate. Position 596 (asparagine 596) interacts with Ca(2+).

It belongs to the polysaccharide lyase 11 family. In terms of assembly, monomer. It depends on Ca(2+) as a cofactor. The cofactor is Mn(2+).

Its subcellular location is the secreted. It catalyses the reaction Endotype eliminative cleavage of L-alpha-rhamnopyranosyl-(1-&gt;4)-alpha-D-galactopyranosyluronic acid bonds of rhamnogalacturonan I domains in ramified hairy regions of pectin leaving L-rhamnopyranose at the reducing end and 4-deoxy-4,5-unsaturated D-galactopyranosyluronic acid at the non-reducing end.. Functionally, pectinolytic enzyme that degrades type I rhamnogalacturonan from plant cell walls and releases oligosaccharide products. Degrades rhamnogalacturonan, polygalacturonic acid, pectic acid and pectin. The sequence is that of Rhamnogalacturonan endolyase YesW (yesW) from Bacillus subtilis (strain 168).